The chain runs to 21 residues: Paulistine (21 aa).

Cys7 and Cys14 are disulfide-bonded. Thr21 bears the Threonine amide mark.

Belongs to the sylv/frat/paul family. In terms of processing, occurs in oxidized and reduced states which are thought to adopt a compact globular and linear structure, respectively.

Functionally, induces transient hyperalgesia and paw edema in mice. Probably exerts its effects via different pathways in an oxidation state-dependent way. This is Paulistine from Polybia paulista (Neotropical social wasp).